A 119-amino-acid chain; its full sequence is U-scoloptoxin(01)-Er1a (119 aa).

Positions 1 to 22 (MEIHSNIILLLLIALFAIFVKM) are cleaved as a signal peptide. In terms of domain architecture, Chitin-binding type-2 spans 39–97 (NFACSGKKPGFYADEGFDCQVYHMCSPEGQLTTYLCGPGTIFNQKKLVCDLPTNYNCAD). C74 and C87 are disulfide-bonded.

It belongs to the scoloptoxin-01 family. Contains 3 disulfide bonds. As to expression, expressed by the venom gland.

It localises to the secreted. The polypeptide is U-scoloptoxin(01)-Er1a (Ethmostigmus rubripes (Giant centipede)).